The following is a 70-amino-acid chain: Large ribosomal subunit protein bL31 (70 aa).

Positions 16, 18, 37, and 40 each coordinate Zn(2+).

This sequence belongs to the bacterial ribosomal protein bL31 family. Type A subfamily. As to quaternary structure, part of the 50S ribosomal subunit. The cofactor is Zn(2+).

Binds the 23S rRNA. The protein is Large ribosomal subunit protein bL31 of Psychromonas ingrahamii (strain DSM 17664 / CCUG 51855 / 37).